We begin with the raw amino-acid sequence, 325 residues long: MAALPVFIPAESFPSILSHETLINHFRTNLPKHSSTITSPVRQNYTVSSPSSLLLMPSWSSSSSLPYMGVKLVTYFPHNSSQNLPGIHGSYTLFSSTTGQTLATMDGTVLTLYRTSSVSGLGSKILARDDSQVLIMVGSGALAPHLIKSHLAAKPSLRRVIIWNRTPQRAQELAETLSKDPQHKEISFDSHDSLDQIIPLGDIISCATNSTVPLVKGEFLKPGTHLDLVGSFSHEMKECDDNAIQRGSVFVDNDTAMIEAGELAGAFERGVIKREDICGNLVELIKGDKEGRKSSTDITVFKSVGSGTVDLLTAQLVHETYLSRC.

The N-terminal 42 residues, 1 to 42 (MAALPVFIPAESFPSILSHETLINHFRTNLPKHSSTITSPVR), are a transit peptide targeting the chloroplast.

The protein belongs to the ornithine cyclodeaminase/mu-crystallin family.

It localises to the plastid. Its subcellular location is the chloroplast. Involved in the biosynthesis of pipecolate (Pip), a metabolite that orchestrates defense amplification, positive regulation of salicylic acid (SA) biosynthesis, and priming to guarantee effective local resistance induction and the establishment of systemic acquired resistance (SAR). Converts delta-(1)-piperideine-2-carboxylate (P2C) to Pip. Mediates reduction of P2C and biosynthesis of Pip in systemic tissue and contributes to SAR establishment. Does not possess ornithine cyclodeaminase activity in vitro. The sequence is that of Protein SAR DEFICIENT 4 from Arabidopsis thaliana (Mouse-ear cress).